Here is a 66-residue protein sequence, read N- to C-terminus: MERMDIIIWLLAVVIVLTTLMIFLHLKTLKIIRLLFPVSKELSKKSCVFPWKKKWTKNYPPSSMYP.

A helical transmembrane segment spans residues 8-24 (IWLLAVVIVLTTLMIFL). An N6-acetyllysine; alternate modification is found at lysine 54. N6-succinyllysine; alternate is present on lysine 54. Lysine 57 carries the N6-acetyllysine modification.

This sequence belongs to the ATPase protein 8 family. Component of the ATP synthase complex composed at least of ATP5F1A/subunit alpha, ATP5F1B/subunit beta, ATP5MC1/subunit c (homooctomer), MT-ATP6/subunit a, MT-ATP8/subunit 8, ATP5ME/subunit e, ATP5MF/subunit f, ATP5MG/subunit g, ATP5MK/subunit k, ATP5MJ/subunit j, ATP5F1C/subunit gamma, ATP5F1D/subunit delta, ATP5F1E/subunit epsilon, ATP5PF/subunit F6, ATP5PB/subunit b, ATP5PD/subunit d, ATP5PO/subunit OSCP. ATP synthase complex consists of a soluble F(1) head domain (subunits alpha(3) and beta(3)) - the catalytic core - and a membrane F(0) domain - the membrane proton channel (subunits c, a, 8, e, f, g, k and j). These two domains are linked by a central stalk (subunits gamma, delta, and epsilon) rotating inside the F1 region and a stationary peripheral stalk (subunits F6, b, d, and OSCP). Interacts with PRICKLE3.

It localises to the mitochondrion membrane. Its function is as follows. Subunit 8, of the mitochondrial membrane ATP synthase complex (F(1)F(0) ATP synthase or Complex V) that produces ATP from ADP in the presence of a proton gradient across the membrane which is generated by electron transport complexes of the respiratory chain. ATP synthase complex consist of a soluble F(1) head domain - the catalytic core - and a membrane F(1) domain - the membrane proton channel. These two domains are linked by a central stalk rotating inside the F(1) region and a stationary peripheral stalk. During catalysis, ATP synthesis in the catalytic domain of F(1) is coupled via a rotary mechanism of the central stalk subunits to proton translocation. In vivo, can only synthesize ATP although its ATP hydrolase activity can be activated artificially in vitro. Part of the complex F(0) domain. This Mammuthus primigenius (Siberian woolly mammoth) protein is ATP synthase F(0) complex subunit 8.